An 86-amino-acid chain; its full sequence is Large ribosomal subunit protein bL27 (86 aa).

A compositionally biased stretch (gly residues) spans 1 to 10 (MAQKKGGGST). Residues 1 to 20 (MAQKKGGGSTRNGRDSESKR) form a disordered region.

This sequence belongs to the bacterial ribosomal protein bL27 family.

In Bordetella avium (strain 197N), this protein is Large ribosomal subunit protein bL27.